The primary structure comprises 350 residues: Heme A synthase (350 aa).

The next 8 helical transmembrane spans lie at 14 to 34 (VAIW…IGGF), 95 to 115 (YVHR…FIYF), 125 to 145 (VVIK…AGWY), 162 to 182 (LALH…QFFD), 202 to 222 (VGII…VAGL), 260 to 280 (VQFI…ILTV), 296 to 316 (IIQI…AIAI), and 317 to 337 (AHQV…CYLR). His264 is a heme binding site. Residue His318 coordinates heme.

It belongs to the COX15/CtaA family. Type 2 subfamily. Interacts with CtaB. Heme b serves as cofactor.

Its subcellular location is the cell membrane. It carries out the reaction Fe(II)-heme o + 2 A + H2O = Fe(II)-heme a + 2 AH2. Its pathway is porphyrin-containing compound metabolism; heme A biosynthesis; heme A from heme O: step 1/1. In terms of biological role, catalyzes the conversion of heme O to heme A by two successive hydroxylations of the methyl group at C8. The first hydroxylation forms heme I, the second hydroxylation results in an unstable dihydroxymethyl group, which spontaneously dehydrates, resulting in the formyl group of heme A. The protein is Heme A synthase of Wolbachia pipientis wMel.